A 355-amino-acid chain; its full sequence is Electron transfer flavoprotein subunit alpha, mitochondrial (355 aa).

FAD is bound at residue 295-323; the sequence is LYIAVGISGAIQHLAGMKDSKVIVAINKD.

It belongs to the ETF alpha-subunit/FixB family. In terms of assembly, heterodimer of an alpha and a beta subunit. The cofactor is FAD.

It is found in the mitochondrion matrix. The electron transfer flavoprotein serves as a specific electron acceptor for several dehydrogenases, including five acyl-CoA dehydrogenases, glutaryl-CoA and sarcosine dehydrogenase. It transfers the electrons to the main mitochondrial respiratory chain via ETF-ubiquinone oxidoreductase (ETF dehydrogenase). The chain is Electron transfer flavoprotein subunit alpha, mitochondrial (etfa) from Dictyostelium discoideum (Social amoeba).